Consider the following 368-residue polypeptide: Chaperone protein DnaJ (368 aa).

Positions 5 to 70 (DYYQVLGVPR…KKRKLYDTHG (66 aa)) constitute a J domain. A CR-type zinc finger spans residues 124–201 (GVERQIQIPT…CNGAGRVEDH (78 aa)). Positions 137, 140, 153, 156, 175, 178, 189, and 192 each coordinate Zn(2+). 4 CXXCXGXG motif repeats span residues 137–144 (CTHCNGSG), 153–160 (CGTCRGSG), 175–182 (CPHCGGRG), and 189–196 (CKVCNGAG).

This sequence belongs to the DnaJ family. Homodimer. Zn(2+) is required as a cofactor.

The protein resides in the cytoplasm. Participates actively in the response to hyperosmotic and heat shock by preventing the aggregation of stress-denatured proteins and by disaggregating proteins, also in an autonomous, DnaK-independent fashion. Unfolded proteins bind initially to DnaJ; upon interaction with the DnaJ-bound protein, DnaK hydrolyzes its bound ATP, resulting in the formation of a stable complex. GrpE releases ADP from DnaK; ATP binding to DnaK triggers the release of the substrate protein, thus completing the reaction cycle. Several rounds of ATP-dependent interactions between DnaJ, DnaK and GrpE are required for fully efficient folding. Also involved, together with DnaK and GrpE, in the DNA replication of plasmids through activation of initiation proteins. This chain is Chaperone protein DnaJ, found in Xylella fastidiosa (strain M12).